Reading from the N-terminus, the 256-residue chain is Thiazole synthase (256 aa).

The active-site Schiff-base intermediate with DXP is the Lys-95. 1-deoxy-D-xylulose 5-phosphate is bound by residues Gly-156, 182–183, and 204–205; these read AG and NT.

The protein belongs to the ThiG family. In terms of assembly, homotetramer. Forms heterodimers with either ThiH or ThiS.

It is found in the cytoplasm. It catalyses the reaction [ThiS sulfur-carrier protein]-C-terminal-Gly-aminoethanethioate + 2-iminoacetate + 1-deoxy-D-xylulose 5-phosphate = [ThiS sulfur-carrier protein]-C-terminal Gly-Gly + 2-[(2R,5Z)-2-carboxy-4-methylthiazol-5(2H)-ylidene]ethyl phosphate + 2 H2O + H(+). It participates in cofactor biosynthesis; thiamine diphosphate biosynthesis. Catalyzes the rearrangement of 1-deoxy-D-xylulose 5-phosphate (DXP) to produce the thiazole phosphate moiety of thiamine. Sulfur is provided by the thiocarboxylate moiety of the carrier protein ThiS. In vitro, sulfur can be provided by H(2)S. This chain is Thiazole synthase, found in Idiomarina loihiensis (strain ATCC BAA-735 / DSM 15497 / L2-TR).